Reading from the N-terminus, the 72-residue chain is Heat shock factor-binding protein 1-like protein 1 (72 aa).

A coiled-coil region spans residues Asp12 to Ser66.

This sequence belongs to the HSBP1 family.

The protein is Heat shock factor-binding protein 1-like protein 1 (Hsbp1l1) of Rattus norvegicus (Rat).